Consider the following 213-residue polypeptide: Transcription antitermination protein NusB (213 aa).

This sequence belongs to the NusB family.

Its function is as follows. Involved in transcription antitermination. Required for transcription of ribosomal RNA (rRNA) genes. Binds specifically to the boxA antiterminator sequence of the ribosomal RNA (rrn) operons. This chain is Transcription antitermination protein NusB, found in Picosynechococcus sp. (strain ATCC 27264 / PCC 7002 / PR-6) (Agmenellum quadruplicatum).